The chain runs to 426 residues: D-cysteine desulfhydrase 1, mitochondrial (426 aa).

Residues 1–63 (MARGAHQAPG…IGSFLSKRPY (63 aa)) constitute a mitochondrion transit peptide. Lys119 is subject to N6-(pyridoxal phosphate)lysine. Ser146 serves as the catalytic Nucleophile.

This sequence belongs to the ACC deaminase/D-cysteine desulfhydrase family. Homodimer. Requires pyridoxal 5'-phosphate as cofactor. In terms of tissue distribution, present in seeds (at protein level).

The protein localises to the mitochondrion. The catalysed reaction is D-cysteine + H2O = hydrogen sulfide + pyruvate + NH4(+) + H(+). Inhibited by L-cysteine (L-cys). In terms of biological role, catalyzes the production of hydrogen sulfide (H2S) from D-cysteine (D-cys). In Oryza sativa subsp. japonica (Rice), this protein is D-cysteine desulfhydrase 1, mitochondrial.